The sequence spans 269 residues: Tryptophan synthase alpha chain (269 aa).

Active-site proton acceptor residues include Glu-49 and Asp-60.

The protein belongs to the TrpA family. As to quaternary structure, tetramer of two alpha and two beta chains.

The catalysed reaction is (1S,2R)-1-C-(indol-3-yl)glycerol 3-phosphate + L-serine = D-glyceraldehyde 3-phosphate + L-tryptophan + H2O. Its pathway is amino-acid biosynthesis; L-tryptophan biosynthesis; L-tryptophan from chorismate: step 5/5. The alpha subunit is responsible for the aldol cleavage of indoleglycerol phosphate to indole and glyceraldehyde 3-phosphate. This chain is Tryptophan synthase alpha chain, found in Pseudomonas putida (strain GB-1).